Consider the following 494-residue polypeptide: Ketol-acid reductoisomerase (NADP(+)) (494 aa).

The KARI N-terminal Rossmann domain occupies 14 to 208 (LDQLGRCRFM…GGHRAGCLES (195 aa)). Residues 45–48 (CGAQ), Arg-68, Arg-76, Ser-78, and 108–110 (DKQ) contribute to the NADP(+) site. The active site involves His-132. Residue Gly-158 coordinates NADP(+). KARI C-terminal knotted domains are found at residues 209 to 344 (SFVA…NYPE) and 345 to 487 (TDVE…MTDM). Positions 217, 221, 389, and 393 each coordinate Mg(2+). Ser-414 lines the substrate pocket.

Belongs to the ketol-acid reductoisomerase family. The cofactor is Mg(2+).

The catalysed reaction is (2R)-2,3-dihydroxy-3-methylbutanoate + NADP(+) = (2S)-2-acetolactate + NADPH + H(+). The enzyme catalyses (2R,3R)-2,3-dihydroxy-3-methylpentanoate + NADP(+) = (S)-2-ethyl-2-hydroxy-3-oxobutanoate + NADPH + H(+). The protein operates within amino-acid biosynthesis; L-isoleucine biosynthesis; L-isoleucine from 2-oxobutanoate: step 2/4. Its pathway is amino-acid biosynthesis; L-valine biosynthesis; L-valine from pyruvate: step 2/4. Functionally, involved in the biosynthesis of branched-chain amino acids (BCAA). Catalyzes an alkyl-migration followed by a ketol-acid reduction of (S)-2-acetolactate (S2AL) to yield (R)-2,3-dihydroxy-isovalerate. In the isomerase reaction, S2AL is rearranged via a Mg-dependent methyl migration to produce 3-hydroxy-3-methyl-2-ketobutyrate (HMKB). In the reductase reaction, this 2-ketoacid undergoes a metal-dependent reduction by NADPH to yield (R)-2,3-dihydroxy-isovalerate. This is Ketol-acid reductoisomerase (NADP(+)) from Vibrio parahaemolyticus serotype O3:K6 (strain RIMD 2210633).